Reading from the N-terminus, the 1243-residue chain is Membrane-associated phosphatidylinositol transfer protein 1 (1243 aa).

Phosphothreonine is present on residues T59, T282, and T287. The tract at residues 259 to 330 (CNTGSEGPEA…HGGGVSPQSL (72 aa)) is disordered. Residues 271-283 (PGKSSTEARPGTS) are compositionally biased toward polar residues. The span at 299–319 (ASPDASFGKQWSSSSRSSYSS) shows a compositional bias: low complexity. S300, S304, S319, S326, S329, S342, S345, S346, and S373 each carry phosphoserine. S382 carries the post-translational modification Phosphoserine; by CDK1. The segment covering 581-593 (AGPGSRGSSRRGS) has biased composition (low complexity). A disordered region spans residues 581-679 (AGPGSRGSSR…PASSEAPDGP (99 aa)). S593, S600, and S621 each carry phosphoserine. A compositionally biased stretch (polar residues) spans 643 to 658 (GSQNSLQVASTATSSG). The 195-residue stretch at 684–878 (RLDFKVSGFF…VVAFILRQVI (195 aa)) folds into the DDHD domain. At S895 the chain carries Phosphoserine. A disordered region spans residues 1206–1243 (LLRSRGPSQVDREGPGTPPTTLARGKTRSISLKLDSEE). An omega-N-methylarginine mark is found at R1210 and R1217. S1236 is modified (phosphoserine).

This sequence belongs to the PtdIns transfer protein family. PI transfer class IIA subfamily. Interacts with PTK2B via its C-terminus. Interacts with RHOA. Has higher affinity for the inactive, GDP-bound form of RHOA. The CDK1-phosphorylated form interacts with PLK1. Interacts with VAPB and PIK4CA. In terms of processing, phosphorylated on multiple sites by CDK1 at the onset of mitosis. Phosphorylation facilitates dissociation from the Golgi complex and is required for interaction with PLK1. Phosphorylated on threonine residues upon treatment with oleic acid. Post-translationally, phosphorylated on tyrosine residues by PTK2B. As to expression, detected at high levels in brain, and at lower levels in lung, kidney, spleen and liver (at protein level). Ubiquitous. Highly expressed in embryonic retina and the central nervous system.

The protein localises to the cytoplasm. The protein resides in the golgi apparatus. Its subcellular location is the golgi stack membrane. It is found in the endoplasmic reticulum membrane. It localises to the lipid droplet. The protein localises to the cleavage furrow. The protein resides in the midbody. It catalyses the reaction a 1,2-diacyl-sn-glycero-3-phospho-(1D-myo-inositol)(in) = a 1,2-diacyl-sn-glycero-3-phospho-(1D-myo-inositol)(out). In terms of biological role, catalyzes the transfer of phosphatidylinositol (PI) between membranes. Binds PI. Also binds phosphatidylcholine (PC) and phosphatidic acid (PA) with the binding affinity order of PI &gt; PA &gt; PC. Regulates RHOA activity, and plays a role in cytoskeleton remodeling. Necessary for normal completion of cytokinesis. Plays a role in maintaining normal diacylglycerol levels in the Golgi apparatus. Necessary for maintaining the normal structure of the endoplasmic reticulum and the Golgi apparatus. Required for protein export from the endoplasmic reticulum and the Golgi. Binds calcium ions. This Mus musculus (Mouse) protein is Membrane-associated phosphatidylinositol transfer protein 1 (Pitpnm1).